A 258-amino-acid polypeptide reads, in one-letter code: UPF0758 protein Bcep1808_2579 (258 aa).

The 123-residue stretch at 136–258 (PIDSPGAVED…TFSFARAGWL (123 aa)) folds into the MPN domain. Residues His-207, His-209, and Asp-220 each contribute to the Zn(2+) site. The JAMM motif signature appears at 207-220 (HNHPSGAVQPSAED).

Belongs to the UPF0758 family.

This is UPF0758 protein Bcep1808_2579 from Burkholderia vietnamiensis (strain G4 / LMG 22486) (Burkholderia cepacia (strain R1808)).